The chain runs to 156 residues: Cytochrome c-type biogenesis protein CcmE 1 (156 aa).

Residues 1 to 8 (MNATRKQR) are Cytoplasmic-facing. A helical; Signal-anchor for type II membrane protein transmembrane segment spans residues 9–29 (LWLVIGVLAAAALAVTLIVFA). The Periplasmic segment spans residues 30–156 (LQRNMSYLFT…ATVAPLTAPR (127 aa)). Histidine 123 and tyrosine 127 together coordinate heme.

It belongs to the CcmE/CycJ family.

The protein resides in the cell inner membrane. Functionally, heme chaperone required for the biogenesis of c-type cytochromes. Transiently binds heme delivered by CcmC and transfers the heme to apo-cytochromes in a process facilitated by CcmF and CcmH. This chain is Cytochrome c-type biogenesis protein CcmE 1, found in Xanthomonas axonopodis pv. citri (strain 306).